Reading from the N-terminus, the 657-residue chain is Methylenetetrahydrofolate reductase 1 (657 aa).

E18 acts as the Proton donor/acceptor in catalysis. NAD(+) is bound by residues 18 to 23 (EFFPPK) and 49 to 50 (TW). Residues 49 to 50 (TW), H78, and 108 to 110 (RGD) contribute to the FAD site. Residue D110 coordinates substrate. S120 bears the Phosphoserine mark. Residues 129–130 (YA), Y152, D171, and K178 each bind FAD. Q189 and Y286 together coordinate substrate. Phosphoserine is present on S301. Positions 308-329 (VNESSEEEGEDETSGEIGSIEN) are disordered. Residues 311 to 321 (SSEEEGEDETS) are compositionally biased toward acidic residues. S358 bears the Phosphoserine mark.

It belongs to the methylenetetrahydrofolate reductase family. The cofactor is FAD.

It catalyses the reaction (6S)-5-methyl-5,6,7,8-tetrahydrofolate + NADP(+) = (6R)-5,10-methylene-5,6,7,8-tetrahydrofolate + NADPH + H(+). The catalysed reaction is (6S)-5-methyl-5,6,7,8-tetrahydrofolate + NAD(+) = (6R)-5,10-methylene-5,6,7,8-tetrahydrofolate + NADH + H(+). It participates in one-carbon metabolism; tetrahydrofolate interconversion. This Saccharomyces cerevisiae (strain ATCC 204508 / S288c) (Baker's yeast) protein is Methylenetetrahydrofolate reductase 1 (MET12).